Consider the following 578-residue polypeptide: Probable ATP-dependent RNA helicase DDX55 homolog (578 aa).

The Q motif motif lies at 7 to 37; sequence PVALKTFREKLGPELLEVFDKSYKSFTDVQV. The 179-residue stretch at 40 to 218 folds into the Helicase ATP-binding domain; it reads GTHLLNLSDV…VFGLRNAKQV (179 aa). 53–60 contributes to the ATP binding site; that stretch reads SPTGSGKT. The DEAD box motif lies at 166 to 169; the sequence is DEAD. A Helicase C-terminal domain is found at 231-393; sequence TLKNYYVECR…EIKVPTNNSR (163 aa). Residues 507 to 557 are disordered; that stretch reads AAKDKKRREKEARKLKKMGGRFRNGGGTGRKAEEKKALKRKAEEEDDAQND. Over residues 510–526 the composition is skewed to basic residues; it reads DKKRREKEARKLKKMGG. A compositionally biased stretch (basic and acidic residues) spans 536–549; it reads RKAEEKKALKRKAE.

This sequence belongs to the DEAD box helicase family. DDX55/SPB4 subfamily.

It carries out the reaction ATP + H2O = ADP + phosphate + H(+). Its function is as follows. Probable ATP-binding RNA helicase. The protein is Probable ATP-dependent RNA helicase DDX55 homolog of Caenorhabditis elegans.